Here is a 393-residue protein sequence, read N- to C-terminus: Acetylornithine aminotransferase 1 (393 aa).

A N(2)-acetyl-L-ornithine-binding site is contributed by R131. 215-218 (DEVQ) provides a ligand contact to pyridoxal 5'-phosphate. Residue K244 is modified to N6-(pyridoxal phosphate)lysine. T272 is a binding site for N(2)-acetyl-L-ornithine. T273 is a binding site for pyridoxal 5'-phosphate.

This sequence belongs to the class-III pyridoxal-phosphate-dependent aminotransferase family. ArgD subfamily. In terms of assembly, homodimer. Pyridoxal 5'-phosphate serves as cofactor.

It is found in the cytoplasm. The catalysed reaction is N(2)-acetyl-L-ornithine + 2-oxoglutarate = N-acetyl-L-glutamate 5-semialdehyde + L-glutamate. It functions in the pathway amino-acid biosynthesis; L-arginine biosynthesis; N(2)-acetyl-L-ornithine from L-glutamate: step 4/4. The protein is Acetylornithine aminotransferase 1 of Bordetella parapertussis (strain 12822 / ATCC BAA-587 / NCTC 13253).